The chain runs to 352 residues: Adenosine deaminase (352 aa).

Ala-2 bears the N-acetylalanine mark. Positions 15 and 17 each coordinate Zn(2+). The substrate site is built by His-17 and Asp-19. Residue Lys-54 is modified to N6-acetyllysine. A substrate-binding site is contributed by Gly-184. Residue His-214 coordinates Zn(2+). Catalysis depends on Glu-217, which acts as the Proton donor. Lys-232 is subject to N6-acetyllysine. Zn(2+) is bound at residue Asp-295. Residue Asp-296 participates in substrate binding.

The protein belongs to the metallo-dependent hydrolases superfamily. Adenosine and AMP deaminases family. As to quaternary structure, interacts with DPP4 (via extracellular domain). Interacts with PLG (via Kringle 4 domain); the interaction stimulates PLG activation when in complex with DPP4. Zn(2+) is required as a cofactor. In terms of tissue distribution, detected in brain and liver (at protein level).

It localises to the cell membrane. The protein resides in the cell junction. It is found in the cytoplasmic vesicle lumen. Its subcellular location is the cytoplasm. The protein localises to the lysosome. The catalysed reaction is adenosine + H2O + H(+) = inosine + NH4(+). The enzyme catalyses 2'-deoxyadenosine + H2O + H(+) = 2'-deoxyinosine + NH4(+). It carries out the reaction cordycepin + H2O + H(+) = 3'-deoxyinosine + NH4(+). Catalyzes the hydrolytic deamination of adenosine and 2-deoxyadenosine. Plays an important role in purine metabolism and in adenosine homeostasis. Modulates signaling by extracellular adenosine, and so contributes indirectly to cellular signaling events. Acts as a positive regulator of T-cell coactivation, by binding DPP4. Its interaction with DPP4 regulates lymphocyte-epithelial cell adhesion. Enhances dendritic cell immunogenicity by affecting dendritic cell costimulatory molecule expression and cytokines and chemokines secretion. Enhances CD4+ T-cell differentiation and proliferation. Acts as a positive modulator of adenosine receptors ADORA1 and ADORA2A, by enhancing their ligand affinity via conformational change. Stimulates plasminogen activation. Plays a role in male fertility. Plays a protective role in early postimplantation embryonic development. Also responsible for the deamination of cordycepin (3'-deoxyadenosine), a fungal natural product that shows antitumor, antibacterial, antifungal, antivirus, and immune regulation properties. The sequence is that of Adenosine deaminase (Ada) from Rattus norvegicus (Rat).